Here is a 483-residue protein sequence, read N- to C-terminus: V-type proton ATPase subunit H (483 aa).

S483 is modified (phosphoserine).

The protein belongs to the V-ATPase H subunit family. As to quaternary structure, V-ATPase is a heteromultimeric enzyme made up of two complexes: the ATP-hydrolytic V1 complex and the proton translocation V0 complex. The V1 complex consists of three catalytic AB heterodimers that form a heterohexamer, three peripheral stalks each consisting of EG heterodimers, one central rotor including subunits D and F, and the regulatory subunits C and H. The proton translocation complex V0 consists of the proton transport subunit a, a ring of proteolipid subunits c9c'', rotary subunit d, subunits e and f, and the accessory subunits ATP6AP1/Ac45 and ATP6AP2/PRR. Interacts with AP2M1. Expressed in brain (at protein level).

The protein localises to the cytoplasmic vesicle. It localises to the clathrin-coated vesicle membrane. Subunit of the V1 complex of vacuolar(H+)-ATPase (V-ATPase), a multisubunit enzyme composed of a peripheral complex (V1) that hydrolyzes ATP and a membrane integral complex (V0) that translocates protons. V-ATPase is responsible for acidifying and maintaining the pH of intracellular compartments and in some cell types, is targeted to the plasma membrane, where it is responsible for acidifying the extracellular environment. Subunit H is essential for V-ATPase activity, but not for the assembly of the complex. Involved in the endocytosis mediated by clathrin-coated pits, required for the formation of endosomes. This Bos taurus (Bovine) protein is V-type proton ATPase subunit H (ATP6V1H).